The sequence spans 291 residues: Ribosomal RNA small subunit methyltransferase A (291 aa).

The S-adenosyl-L-methionine site is built by His-37, Leu-39, Gly-64, Glu-85, Asp-110, and Asn-131.

It belongs to the class I-like SAM-binding methyltransferase superfamily. rRNA adenine N(6)-methyltransferase family. RsmA subfamily.

It localises to the cytoplasm. The enzyme catalyses adenosine(1518)/adenosine(1519) in 16S rRNA + 4 S-adenosyl-L-methionine = N(6)-dimethyladenosine(1518)/N(6)-dimethyladenosine(1519) in 16S rRNA + 4 S-adenosyl-L-homocysteine + 4 H(+). Its function is as follows. Specifically dimethylates two adjacent adenosines (A1518 and A1519) in the loop of a conserved hairpin near the 3'-end of 16S rRNA in the 30S particle. May play a critical role in biogenesis of 30S subunits. This chain is Ribosomal RNA small subunit methyltransferase A, found in Dehalococcoides mccartyi (strain ATCC BAA-2100 / JCM 16839 / KCTC 5957 / BAV1).